A 239-amino-acid polypeptide reads, in one-letter code: Sugar fermentation stimulation protein homolog (239 aa).

Belongs to the SfsA family.

This Synechococcus sp. (strain JA-2-3B'a(2-13)) (Cyanobacteria bacterium Yellowstone B-Prime) protein is Sugar fermentation stimulation protein homolog.